A 118-amino-acid polypeptide reads, in one-letter code: Large ribosomal subunit protein bL19 (118 aa).

It belongs to the bacterial ribosomal protein bL19 family.

Functionally, this protein is located at the 30S-50S ribosomal subunit interface and may play a role in the structure and function of the aminoacyl-tRNA binding site. This is Large ribosomal subunit protein bL19 from Ligilactobacillus salivarius (strain UCC118) (Lactobacillus salivarius).